Reading from the N-terminus, the 114-residue chain is Nucleoid-associated protein PCC7424_2224 (114 aa).

This sequence belongs to the YbaB/EbfC family. Homodimer.

Its subcellular location is the cytoplasm. The protein resides in the nucleoid. In terms of biological role, binds to DNA and alters its conformation. May be involved in regulation of gene expression, nucleoid organization and DNA protection. This is Nucleoid-associated protein PCC7424_2224 from Gloeothece citriformis (strain PCC 7424) (Cyanothece sp. (strain PCC 7424)).